The primary structure comprises 254 residues: Probable membrane transporter protein YjnA (254 aa).

6 consecutive transmembrane segments (helical) span residues 5–25, 75–95, 105–125, 143–163, 187–207, and 209–229; these read IILM…GGAA, AIGS…FPAF, HALG…LFLD, ALTI…SIGS, IAHA…FGSV, and YMLA…GSHL.

It belongs to the 4-toluene sulfonate uptake permease (TSUP) (TC 2.A.102) family.

Its subcellular location is the cell membrane. This chain is Probable membrane transporter protein YjnA (yjnA), found in Bacillus subtilis (strain 168).